We begin with the raw amino-acid sequence, 234 residues long: 7-carboxy-7-deazaguanine synthase (234 aa).

Substrate contacts are provided by residues Ile36–Gly38 and Arg51. Residues Phe42–Glu234 enclose the Radical SAM core domain. [4Fe-4S] cluster is bound by residues Cys55, Cys59, and Cys62. Thr64 serves as a coordination point for Mg(2+). Thr100 contributes to the substrate binding site. Residues Gly102, Ser144–Lys146, and Gln195–Asp198 each bind S-adenosyl-L-methionine.

This sequence belongs to the radical SAM superfamily. 7-carboxy-7-deazaguanine synthase family. In terms of assembly, homodimer. [4Fe-4S] cluster is required as a cofactor. It depends on S-adenosyl-L-methionine as a cofactor. Mg(2+) serves as cofactor.

It carries out the reaction 6-carboxy-5,6,7,8-tetrahydropterin + H(+) = 7-carboxy-7-deazaguanine + NH4(+). It functions in the pathway purine metabolism; 7-cyano-7-deazaguanine biosynthesis. Functionally, catalyzes the complex heterocyclic radical-mediated conversion of 6-carboxy-5,6,7,8-tetrahydropterin (CPH4) to 7-carboxy-7-deazaguanine (CDG), a step common to the biosynthetic pathways of all 7-deazapurine-containing compounds. The chain is 7-carboxy-7-deazaguanine synthase from Rickettsia prowazekii (strain Madrid E).